Reading from the N-terminus, the 544-residue chain is Nucleosome assembly protein 1-like 3 (544 aa).

Disordered regions lie at residues 1-109 and 168-345; these read MAEA…LFLD and PTEE…KKED. The span at 35–83 shows a compositional bias: low complexity; sequence SNSSSSTNSCSSSGSSSSGSSSSSSSSSSSSSSSSSSSSGSSGSSSNGS. The span at 168–192 shows a compositional bias: acidic residues; it reads PTEEECEWNSEEEFSGDEEMQDDTP. Composition is skewed to basic and acidic residues over residues 207–228, 235–277, and 314–332; these read CNEK…PEAK, PKET…KADS, and PARE…EGVN.

Belongs to the nucleosome assembly protein (NAP) family. As to expression, expressed in brain.

Its subcellular location is the nucleus. The protein localises to the cytoplasm. The polypeptide is Nucleosome assembly protein 1-like 3 (Nap1l3) (Mus musculus (Mouse)).